Here is a 614-residue protein sequence, read N- to C-terminus: Aspartate--tRNA ligase (614 aa).

Position 174 (Glu-174) interacts with L-aspartate. The tract at residues 198-201 (QLFK) is aspartate. An L-aspartate-binding site is contributed by Arg-220. Residues 220–222 (RDE) and Gln-229 contribute to the ATP site. Residue His-448 participates in L-aspartate binding. Glu-482 contributes to the ATP binding site. Residue Arg-489 coordinates L-aspartate. Position 534–537 (534–537 (GLDR)) interacts with ATP. The tract at residues 587–614 (YEDSVKETEQRLEKEAQEDADKNSTWDE) is disordered.

This sequence belongs to the class-II aminoacyl-tRNA synthetase family. Type 1 subfamily. Homodimer.

It localises to the cytoplasm. It catalyses the reaction tRNA(Asp) + L-aspartate + ATP = L-aspartyl-tRNA(Asp) + AMP + diphosphate. In terms of biological role, catalyzes the attachment of L-aspartate to tRNA(Asp) in a two-step reaction: L-aspartate is first activated by ATP to form Asp-AMP and then transferred to the acceptor end of tRNA(Asp). The chain is Aspartate--tRNA ligase from Lactobacillus johnsonii (strain CNCM I-12250 / La1 / NCC 533).